Reading from the N-terminus, the 174-residue chain is Transcription antitermination protein NusB (174 aa).

The disordered stretch occupies residues 1 to 28 (MVEPKKPFMRKPPPKTGDKKPGDRKANR). Over residues 16–25 (TGDKKPGDRK) the composition is skewed to basic and acidic residues.

It belongs to the NusB family.

Involved in transcription antitermination. Required for transcription of ribosomal RNA (rRNA) genes. Binds specifically to the boxA antiterminator sequence of the ribosomal RNA (rrn) operons. In Rhodopseudomonas palustris (strain BisB5), this protein is Transcription antitermination protein NusB.